Reading from the N-terminus, the 180-residue chain is UPF0102 protein Tery_0733 (180 aa).

This sequence belongs to the UPF0102 family.

The chain is UPF0102 protein Tery_0733 from Trichodesmium erythraeum (strain IMS101).